Here is a 409-residue protein sequence, read N- to C-terminus: Tyrosine--tRNA ligase (409 aa).

Residue tyrosine 39 participates in L-tyrosine binding. A 'HIGH' region motif is present at residues proline 44–serine 53. Residues tyrosine 176 and glutamine 180 each coordinate L-tyrosine. The 'KMSKS' region motif lies at lysine 236–threonine 240. Lysine 239 contributes to the ATP binding site. The region spanning isoleucine 346–alanine 408 is the S4 RNA-binding domain.

Belongs to the class-I aminoacyl-tRNA synthetase family. TyrS type 1 subfamily. Homodimer.

The protein localises to the cytoplasm. It catalyses the reaction tRNA(Tyr) + L-tyrosine + ATP = L-tyrosyl-tRNA(Tyr) + AMP + diphosphate + H(+). Its function is as follows. Catalyzes the attachment of tyrosine to tRNA(Tyr) in a two-step reaction: tyrosine is first activated by ATP to form Tyr-AMP and then transferred to the acceptor end of tRNA(Tyr). The protein is Tyrosine--tRNA ligase of Zymomonas mobilis subsp. mobilis (strain ATCC 31821 / ZM4 / CP4).